A 503-amino-acid polypeptide reads, in one-letter code: Glucose-6-phosphate 1-dehydrogenase (503 aa).

NADP(+) contacts are provided by residues 14–21 (GASGDLSK), Arg49, and Lys158. D-glucose 6-phosphate-binding positions include Lys158, 188-192 (HYLGK), Glu226, and Asp245. His250 acts as the Proton acceptor in catalysis. Residue Lys341 participates in NADP(+) binding. Lys344 serves as a coordination point for D-glucose 6-phosphate. Lys350, Arg354, and Arg376 together coordinate NADP(+). Gln378 is a D-glucose 6-phosphate binding site. Residues 384–386 (YLK), Arg471, and Tyr487 contribute to the NADP(+) site.

This sequence belongs to the glucose-6-phosphate dehydrogenase family.

The catalysed reaction is D-glucose 6-phosphate + NADP(+) = 6-phospho-D-glucono-1,5-lactone + NADPH + H(+). It functions in the pathway carbohydrate degradation; pentose phosphate pathway; D-ribulose 5-phosphate from D-glucose 6-phosphate (oxidative stage): step 1/3. In terms of biological role, catalyzes the rate-limiting step of the oxidative pentose-phosphate pathway, which represents a route for the dissimilation of carbohydrates besides glycolysis. The main function of this enzyme is to provide reducing power (NADPH) and pentose phosphates for fatty acid and nucleic acid synthesis. The G6PDH activity is required to cope with hydrogen peroxide and potassium bisulfite stresses and plays a role in adaptation to conditions used in wine fermentations. The protein is Glucose-6-phosphate 1-dehydrogenase of Hanseniaspora uvarum (Yeast).